Reading from the N-terminus, the 44-residue chain is Conotoxin Sr5.5 (44 aa).

The signal sequence occupies residues 1-19 (MRCLPVFVILLLLIASAPS). The propeptide occupies 20–29 (VDDNAKGTQH).

It belongs to the conotoxin T superfamily. Contains 2 disulfide bonds that can be either 'C1-C3, C2-C4' or 'C1-C4, C2-C3', since these disulfide connectivities have been observed for conotoxins with cysteine framework V (for examples, see AC P0DQQ7 and AC P81755). Expressed by the venom duct.

It is found in the secreted. This chain is Conotoxin Sr5.5, found in Conus spurius (Alphabet cone).